Reading from the N-terminus, the 774-residue chain is Shugoshin (774 aa).

Positions 41–105 (SLRIRGLENE…AELSSLLASL (65 aa)) form a coiled coil. Disordered regions lie at residues 106-151 (GEPP…QEGR), 205-661 (SPSP…DAQL), and 676-774 (CASP…SMML). The span at 109 to 120 (PSKRRLSEERRY) shows a compositional bias: basic and acidic residues. Residues 214–224 (AEETETTEQVE) are compositionally biased toward acidic residues. Positions 297–318 (GDNQNEPNKATKLQQGKENGNE) are enriched in polar residues. Basic and acidic residues predominate over residues 382–398 (KGKEKVDLPAPDKKSAV). Polar residues predominate over residues 399 to 409 (EETQGNSTSAF). Composition is skewed to basic and acidic residues over residues 482–495 (NLRD…KELF) and 549–558 (FEKEKEKEPQ). Composition is skewed to polar residues over residues 595-604 (PSVQEQSTLN) and 640-651 (QSMSRSVPTIPT). A compositionally biased stretch (low complexity) spans 706-722 (ASSAASTETTATASAKP). Acidic residues predominate over residues 743–754 (LAQEEEDEEDVG). Positions 765 to 774 (RASRRRSMML) are enriched in basic residues.

It belongs to the shugoshin family.

The protein resides in the nucleus. Its subcellular location is the chromosome. It is found in the centromere. Its function is as follows. Plays a central role in chromosome cohesion during cell division by preventing premature dissociation of cohesin complex from centromeres after prophase, when most of cohesin complex dissociates from chromosomes arms. The protein is Shugoshin (sgo-1) of Neurospora crassa (strain ATCC 24698 / 74-OR23-1A / CBS 708.71 / DSM 1257 / FGSC 987).